Here is a 143-residue protein sequence, read N- to C-terminus: Sec-independent protein translocase protein TatB (143 aa).

A helical transmembrane segment spans residues 2–22; sequence FGNIGWGEFMVLLVAALVILG. The interval 97–143 is disordered; sequence FDKPGSVSFDKSNPGTKAVSADPSTPTAPQNKPLAAGERPPIDLDAT.

It belongs to the TatB family. As to quaternary structure, the Tat system comprises two distinct complexes: a TatABC complex, containing multiple copies of TatA, TatB and TatC subunits, and a separate TatA complex, containing only TatA subunits. Substrates initially bind to the TatABC complex, which probably triggers association of the separate TatA complex to form the active translocon.

Its subcellular location is the cell membrane. In terms of biological role, part of the twin-arginine translocation (Tat) system that transports large folded proteins containing a characteristic twin-arginine motif in their signal peptide across membranes. Together with TatC, TatB is part of a receptor directly interacting with Tat signal peptides. TatB may form an oligomeric binding site that transiently accommodates folded Tat precursor proteins before their translocation. The chain is Sec-independent protein translocase protein TatB from Rhodococcus opacus (strain B4).